The primary structure comprises 272 residues: Phosphatidylglycerol--prolipoprotein diacylglyceryl transferase (272 aa).

The next 4 membrane-spanning stretches (helical) occupy residues 15 to 35 (LGPLYVHMYSVFMLAGALVLF), 53 to 73 (AFAVTSLLIPVILGARLWHVV), 94 to 114 (GLGFIGGVFSGLICFFVIAKI), and 117 to 137 (VPPFTFLDALAPGILVALCFA). Position 138 (arginine 138) interacts with a 1,2-diacyl-sn-glycero-3-phospho-(1'-sn-glycerol). The next 3 helical transmembrane spans lie at 174–194 (FHPIFLYEIILNVFIIVILLV), 199–219 (VFVKTVFPKGSVFAAFLVLYG), and 237–257 (FGLDLNYVGAAAMIIVGVLIA).

Belongs to the Lgt family.

The protein localises to the cell membrane. The catalysed reaction is L-cysteinyl-[prolipoprotein] + a 1,2-diacyl-sn-glycero-3-phospho-(1'-sn-glycerol) = an S-1,2-diacyl-sn-glyceryl-L-cysteinyl-[prolipoprotein] + sn-glycerol 1-phosphate + H(+). It functions in the pathway protein modification; lipoprotein biosynthesis (diacylglyceryl transfer). Catalyzes the transfer of the diacylglyceryl group from phosphatidylglycerol to the sulfhydryl group of the N-terminal cysteine of a prolipoprotein, the first step in the formation of mature lipoproteins. This is Phosphatidylglycerol--prolipoprotein diacylglyceryl transferase from Tropheryma whipplei (strain TW08/27) (Whipple's bacillus).